Here is a 379-residue protein sequence, read N- to C-terminus: Chaperone protein DnaJ (379 aa).

The J domain maps to aspartate 5–glycine 69. A CR-type zinc finger spans residues glycine 136 to threonine 218. Zn(2+) is bound by residues cysteine 149, cysteine 152, cysteine 166, cysteine 169, cysteine 192, cysteine 195, cysteine 206, and cysteine 209. 4 CXXCXGXG motif repeats span residues cysteine 149 to glycine 156, cysteine 166 to glycine 173, cysteine 192 to glycine 199, and cysteine 206 to glycine 213.

This sequence belongs to the DnaJ family. As to quaternary structure, homodimer. Zn(2+) serves as cofactor.

It is found in the cytoplasm. Its function is as follows. Participates actively in the response to hyperosmotic and heat shock by preventing the aggregation of stress-denatured proteins and by disaggregating proteins, also in an autonomous, DnaK-independent fashion. Unfolded proteins bind initially to DnaJ; upon interaction with the DnaJ-bound protein, DnaK hydrolyzes its bound ATP, resulting in the formation of a stable complex. GrpE releases ADP from DnaK; ATP binding to DnaK triggers the release of the substrate protein, thus completing the reaction cycle. Several rounds of ATP-dependent interactions between DnaJ, DnaK and GrpE are required for fully efficient folding. Also involved, together with DnaK and GrpE, in the DNA replication of plasmids through activation of initiation proteins. This chain is Chaperone protein DnaJ, found in Staphylococcus aureus.